A 497-amino-acid polypeptide reads, in one-letter code: Ectonucleoside triphosphate diphosphohydrolase 8 (497 aa).

Residues 1–8 (MGLSWKER) are Cytoplasmic-facing. A helical transmembrane segment spans residues 9-29 (VFMALLGVAAASGLTMLVLIL). At 30–473 (VKAINVLLPA…AQSYSIWTAG (444 aa)) the chain is on the extracellular side. A disulfide bridge connects residues cysteine 78 and cysteine 102. Catalysis depends on glutamate 168, which acts as the Proton acceptor. Cysteine 245 and cysteine 294 are joined by a disulfide. The N-linked (GlcNAc...) asparagine glycan is linked to asparagine 306. Cysteines 331 and 337 form a disulfide. The N-linked (GlcNAc...) asparagine glycan is linked to asparagine 365. Residues cysteine 383 and cysteine 405 are joined by a disulfide bond. Residues 474 to 494 (VVFAVLTLVAILGAAAIQIFW) traverse the membrane as a helical segment. At 495-497 (TQD) the chain is on the cytoplasmic side.

The protein belongs to the GDA1/CD39 NTPase family. It depends on Ca(2+) as a cofactor. Mg(2+) is required as a cofactor. In terms of processing, N-glycosylated. In terms of tissue distribution, expressed in liver, jejunum and kidney.

It is found in the cell membrane. The catalysed reaction is a ribonucleoside 5'-triphosphate + 2 H2O = a ribonucleoside 5'-phosphate + 2 phosphate + 2 H(+). In terms of biological role, canalicular ectonucleoside NTPDase responsible for the main hepatic NTPDase activity. Ectonucleoside NTPDases catalyze the hydrolysis of gamma- and beta-phosphate residues of nucleotides, playing a central role in concentration of extracellular nucleotides. Has activity toward ATP, ADP, UTP and UDP, but not toward AMP. This is Ectonucleoside triphosphate diphosphohydrolase 8 (Entpd8) from Mus musculus (Mouse).